The following is a 259-amino-acid chain: 4-hydroxy-tetrahydrodipicolinate reductase (259 aa).

NAD(+) is bound by residues glycine 9–methionine 14 and glutamate 35. Residue arginine 36 coordinates NADP(+). NAD(+) is bound by residues glycine 92–threonine 94 and alanine 116–methionine 119. The active-site Proton donor/acceptor is the histidine 149. Histidine 150 serves as a coordination point for (S)-2,3,4,5-tetrahydrodipicolinate. Residue lysine 153 is the Proton donor of the active site. Residue glycine 159 to threonine 160 participates in (S)-2,3,4,5-tetrahydrodipicolinate binding.

This sequence belongs to the DapB family.

Its subcellular location is the cytoplasm. It catalyses the reaction (S)-2,3,4,5-tetrahydrodipicolinate + NAD(+) + H2O = (2S,4S)-4-hydroxy-2,3,4,5-tetrahydrodipicolinate + NADH + H(+). The enzyme catalyses (S)-2,3,4,5-tetrahydrodipicolinate + NADP(+) + H2O = (2S,4S)-4-hydroxy-2,3,4,5-tetrahydrodipicolinate + NADPH + H(+). The protein operates within amino-acid biosynthesis; L-lysine biosynthesis via DAP pathway; (S)-tetrahydrodipicolinate from L-aspartate: step 4/4. Functionally, catalyzes the conversion of 4-hydroxy-tetrahydrodipicolinate (HTPA) to tetrahydrodipicolinate. The chain is 4-hydroxy-tetrahydrodipicolinate reductase from Nitratidesulfovibrio vulgaris (strain DP4) (Desulfovibrio vulgaris).